The chain runs to 617 residues: Dihydroxy-acid dehydratase (617 aa).

D82 serves as a coordination point for Mg(2+). C123 serves as a coordination point for [2Fe-2S] cluster. Mg(2+)-binding residues include D124 and K125. An N6-carboxylysine modification is found at K125. Residue C197 participates in [2Fe-2S] cluster binding. E497 provides a ligand contact to Mg(2+). Residue S523 is the Proton acceptor of the active site.

The protein belongs to the IlvD/Edd family. Homodimer. The cofactor is [2Fe-2S] cluster. Mg(2+) serves as cofactor.

It carries out the reaction (2R)-2,3-dihydroxy-3-methylbutanoate = 3-methyl-2-oxobutanoate + H2O. It catalyses the reaction (2R,3R)-2,3-dihydroxy-3-methylpentanoate = (S)-3-methyl-2-oxopentanoate + H2O. It functions in the pathway amino-acid biosynthesis; L-isoleucine biosynthesis; L-isoleucine from 2-oxobutanoate: step 3/4. It participates in amino-acid biosynthesis; L-valine biosynthesis; L-valine from pyruvate: step 3/4. Functionally, functions in the biosynthesis of branched-chain amino acids. Catalyzes the dehydration of (2R,3R)-2,3-dihydroxy-3-methylpentanoate (2,3-dihydroxy-3-methylvalerate) into 2-oxo-3-methylpentanoate (2-oxo-3-methylvalerate) and of (2R)-2,3-dihydroxy-3-methylbutanoate (2,3-dihydroxyisovalerate) into 2-oxo-3-methylbutanoate (2-oxoisovalerate), the penultimate precursor to L-isoleucine and L-valine, respectively. This chain is Dihydroxy-acid dehydratase, found in Streptomyces coelicolor (strain ATCC BAA-471 / A3(2) / M145).